Consider the following 151-residue polypeptide: uncharacterized protein (151 aa).

Residues 1 to 151 form a disordered region; that stretch reads MAELASIIRP…SSKTTTLKAR (151 aa). Over residues 33–45 the composition is skewed to low complexity; sequence STGLSDLLMLLQS. Positions 53 to 64 are enriched in basic residues; the sequence is RARRRTVCRPRR. Residues 108–123 are compositionally biased toward low complexity; sequence SSSSNTSSGTATSGES. Positions 126–141 are enriched in basic and acidic residues; that stretch reads ADWRDSSSASDDDRIP.

This is an uncharacterized protein from Aotus trivirgatus (Three-striped night monkey).